Reading from the N-terminus, the 107-residue chain is Integration host factor subunit beta (107 aa).

The interval 56–107 (RPARVGRNPKSGEKVQVPEKFVPHFKPGKELRERVDGRAGEPLKADDPDDER) is disordered. Over residues 82-101 (PGKELRERVDGRAGEPLKAD) the composition is skewed to basic and acidic residues.

The protein belongs to the bacterial histone-like protein family. As to quaternary structure, heterodimer of an alpha and a beta chain.

Functionally, this protein is one of the two subunits of integration host factor, a specific DNA-binding protein that functions in genetic recombination as well as in transcriptional and translational control. This Burkholderia vietnamiensis (strain G4 / LMG 22486) (Burkholderia cepacia (strain R1808)) protein is Integration host factor subunit beta.